Consider the following 1087-residue polypeptide: Collagen alpha-2(I) chain (1087 aa).

Residues alanine 1–valine 931 are disordered. Low complexity-rich tracts occupy residues glutamate 83–proline 120, glutamate 150–proline 159, and proline 166–proline 187. Positions phenylalanine 189 to glutamine 199 are enriched in pro residues. The span at proline 201–alanine 211 shows a compositional bias: low complexity. Gly residues predominate over residues glycine 218–glycine 227. Low complexity-rich tracts occupy residues glutamate 228–glutamine 241, alanine 278–serine 321, proline 335–proline 345, lysine 360–threonine 384, and glutamine 396–proline 408. A compositionally biased stretch (gly residues) spans glycine 409–glycine 418. The span at asparagine 443–glutamine 453 shows a compositional bias: low complexity. A compositionally biased stretch (gly residues) spans glycine 466–glycine 493. Residues lysine 504–proline 515 are compositionally biased toward basic and acidic residues. Low complexity-rich tracts occupy residues proline 560–arginine 602, phenylalanine 613–lysine 640, and proline 677–glutamine 695. Positions glycine 708–glycine 717 are enriched in gly residues. 2 stretches are compositionally biased toward low complexity: residues glutamate 718–proline 740 and proline 776–proline 788. Residues glycine 792–glycine 812 are compositionally biased toward gly residues. Low complexity predominate over residues alanine 813–proline 828. Residues arginine 829 to leucine 843 are compositionally biased toward basic and acidic residues. Composition is skewed to low complexity over residues leucine 849 to asparagine 868 and alanine 897 to proline 909. Pro residues predominate over residues alanine 910–proline 924. The Fibrillar collagen NC1 domain maps to tyrosine 929–lysine 1087.

This sequence belongs to the fibrillar collagen family.

It is found in the secreted. The protein localises to the extracellular space. It localises to the extracellular matrix. The chain is Collagen alpha-2(I) chain from Epinephelus costae (Goldblotch grouper).